The primary structure comprises 423 residues: UDP-N-acetylmuramoylalanine--D-glutamate ligase (423 aa).

ATP is bound at residue 112–118 (GSVGKST).

This sequence belongs to the MurCDEF family.

Its subcellular location is the cytoplasm. It catalyses the reaction UDP-N-acetyl-alpha-D-muramoyl-L-alanine + D-glutamate + ATP = UDP-N-acetyl-alpha-D-muramoyl-L-alanyl-D-glutamate + ADP + phosphate + H(+). It functions in the pathway cell wall biogenesis; peptidoglycan biosynthesis. Cell wall formation. Catalyzes the addition of glutamate to the nucleotide precursor UDP-N-acetylmuramoyl-L-alanine (UMA). The chain is UDP-N-acetylmuramoylalanine--D-glutamate ligase from Thermosipho africanus (strain TCF52B).